Consider the following 79-residue polypeptide: Sulfur carrier protein TusA (79 aa).

Cys-17 (cysteine persulfide intermediate) is an active-site residue.

Belongs to the sulfur carrier protein TusA family.

It is found in the cytoplasm. Its function is as follows. Sulfur carrier protein which probably makes part of a sulfur-relay system. The sequence is that of Sulfur carrier protein TusA from Haemophilus influenzae (strain 86-028NP).